A 311-amino-acid polypeptide reads, in one-letter code: tRNA dimethylallyltransferase (311 aa).

Residue 9 to 16 coordinates ATP; sequence GPTAVGKT. 11–16 provides a ligand contact to substrate; the sequence is TAVGKT. The interaction with substrate tRNA stretch occupies residues 34–37; sequence DSMQ.

The protein belongs to the IPP transferase family. Monomer. It depends on Mg(2+) as a cofactor.

It carries out the reaction adenosine(37) in tRNA + dimethylallyl diphosphate = N(6)-dimethylallyladenosine(37) in tRNA + diphosphate. Functionally, catalyzes the transfer of a dimethylallyl group onto the adenine at position 37 in tRNAs that read codons beginning with uridine, leading to the formation of N6-(dimethylallyl)adenosine (i(6)A). The chain is tRNA dimethylallyltransferase from Clostridium botulinum (strain Okra / Type B1).